Consider the following 267-residue polypeptide: Glucosamine-6-phosphate deaminase (267 aa).

The active-site Proton acceptor; for enolization step is the Asp72. Asp141 functions as the For ring-opening step in the catalytic mechanism. The active-site Proton acceptor; for ring-opening step is the His143. Residue Glu148 is the For ring-opening step of the active site.

This sequence belongs to the glucosamine/galactosamine-6-phosphate isomerase family. NagB subfamily. In terms of assembly, homohexamer.

It carries out the reaction alpha-D-glucosamine 6-phosphate + H2O = beta-D-fructose 6-phosphate + NH4(+). Its pathway is amino-sugar metabolism; N-acetylneuraminate degradation; D-fructose 6-phosphate from N-acetylneuraminate: step 5/5. With respect to regulation, allosterically activated by N-acetylglucosamine 6-phosphate (GlcNAc6P). Catalyzes the reversible isomerization-deamination of glucosamine 6-phosphate (GlcN6P) to form fructose 6-phosphate (Fru6P) and ammonium ion. The chain is Glucosamine-6-phosphate deaminase from Actinobacillus pleuropneumoniae serotype 5b (strain L20).